Consider the following 647-residue polypeptide: Macrolide export ATP-binding/permease protein MacB (647 aa).

The region spanning 7–245 is the ABC transporter domain; sequence IRLEDICKTF…EATLQPHEEI (239 aa). 43–50 serves as a coordination point for ATP; sequence GASGSGKS. A run of 4 helical transmembrane segments spans residues 274-294, 529-549, 573-593, and 610-630; these read VLTLLGIIIGVSSVVTMLAIG, VAAISLLVGGIGVMNIMLVSV, FIIEALSVSAIGGAIGVILGL, and FGPVLLAFACAFATGLIFGFL.

This sequence belongs to the ABC transporter superfamily. Macrolide exporter (TC 3.A.1.122) family. Homodimer.

The protein localises to the cell inner membrane. In terms of biological role, non-canonical ABC transporter that contains transmembrane domains (TMD), which form a pore in the inner membrane, and an ATP-binding domain (NBD), which is responsible for energy generation. Confers resistance against macrolides. The sequence is that of Macrolide export ATP-binding/permease protein MacB from Brucella melitensis biotype 1 (strain ATCC 23456 / CCUG 17765 / NCTC 10094 / 16M).